A 158-amino-acid polypeptide reads, in one-letter code: Phosphopantetheine adenylyltransferase (158 aa).

T8 lines the substrate pocket. ATP is bound by residues 8–9 and H16; that span reads TF. K40, L72, and R86 together coordinate substrate. Residues 87-89, E97, and 122-128 each bind ATP; these read GLR and HAFISSS.

The protein belongs to the bacterial CoaD family. In terms of assembly, homohexamer. Mg(2+) serves as cofactor.

The protein localises to the cytoplasm. It carries out the reaction (R)-4'-phosphopantetheine + ATP + H(+) = 3'-dephospho-CoA + diphosphate. It participates in cofactor biosynthesis; coenzyme A biosynthesis; CoA from (R)-pantothenate: step 4/5. Functionally, reversibly transfers an adenylyl group from ATP to 4'-phosphopantetheine, yielding dephospho-CoA (dPCoA) and pyrophosphate. The protein is Phosphopantetheine adenylyltransferase of Campylobacter jejuni subsp. jejuni serotype O:6 (strain 81116 / NCTC 11828).